Reading from the N-terminus, the 592-residue chain is RNA-binding protein 47 (592 aa).

Over residues 1-24 the composition is skewed to low complexity; the sequence is MTAEDAAAAMSSDSAAGGAASAKA. The tract at residues 1-26 is disordered; that stretch reads MTAEDAAAAMSSDSAAGGAASAKAPE. 3 RRM domains span residues 73 to 151, 153 to 235, and 248 to 320; these read CEVF…CSVD, CRLF…WAEP, and KILY…LAKP. An asymmetric dimethylarginine; alternate mark is found at R397 and R408. Omega-N-methylarginine; alternate is present on residues R397 and R408.

This sequence belongs to the RRM RBM47 family. Homodimer. Interacts with A1CF. Interacts with APOBEC1; form an mRNA editing complex. Interacts with RBPMS.

Its subcellular location is the nucleus. It localises to the cytoplasm. Single-stranded RNA-binding protein that functions in a variety of RNA processes, including alternative splicing, RNA stabilization, and RNA editing. Functions as an enzyme-substrate adapter for the cytidine deaminase APOBEC1. With APOBEC1 forms an mRNA editing complex involved into cytidine to uridine editing of a variety of mRNA molecules. Through the binding of their 3'UTR, also stabilizes a variety of mRNAs and regulates the expression of genes such as the interferon alpha/beta receptor and interleukin-10. Also involved in the alternative splicing of several genes including TJP1. Binds the pre-mRNA (U)GCAUG consensus sequences in downstream intronic regions of alternative exons, regulating their exclusion and inclusion into mRNAs. Independently of its RNA-binding activity, could negatively regulate MAVS by promoting its lysosomal degradation. The polypeptide is RNA-binding protein 47 (Canis lupus familiaris (Dog)).